Reading from the N-terminus, the 153-residue chain is Cyanate hydratase (153 aa).

Active-site residues include R88, E91, and S114.

The protein belongs to the cyanase family.

It catalyses the reaction cyanate + hydrogencarbonate + 3 H(+) = NH4(+) + 2 CO2. Its function is as follows. Catalyzes the reaction of cyanate with bicarbonate to produce ammonia and carbon dioxide. The sequence is that of Cyanate hydratase from Mycolicibacterium vanbaalenii (strain DSM 7251 / JCM 13017 / BCRC 16820 / KCTC 9966 / NRRL B-24157 / PYR-1) (Mycobacterium vanbaalenii).